The chain runs to 483 residues: Pre-glycoprotein polyprotein GP complex (483 aa).

Residue Gly-2 is the site of N-myristoyl glycine; by host attachment. Residues 2-17 (GQFISFMQEIPIFLQE) lie on the Extracellular side of the membrane. A helical membrane pass occupies residues 18–32 (ALNIALVAVSLICIV). A topological domain (cytoplasmic) is located at residue Lys-33. A helical transmembrane segment spans residues 34 to 53 (GLVNLYRCGLFQLMVFLVLA). 2 consecutive stretches face the extracellular side: residues 54 to 58 (GRSCS) and 59 to 422 (EETF…TLVD). Cys-57 provides a ligand contact to Zn(2+). Residues Asn-83 and Asn-95 are each glycosylated (N-linked (GlcNAc...) asparagine; by host). Intrachain disulfides connect Cys-92-Cys-224, Cys-134-Cys-162, Cys-205-Cys-211, Cys-269-Cys-282, Cys-291-Cys-300, and Cys-354-Cys-375. N-linked (GlcNAc...) asparagine; by host glycosylation is found at Asn-164 and Asn-176. 4 N-linked (GlcNAc...) asparagine; by host glycosylation sites follow: Asn-355, Asn-363, Asn-380, and Asn-385. Residues 423–443 (ICFWSTVFFTSTLFLHLIGFP) form a helical membrane-spanning segment. The Cytoplasmic segment spans residues 444 to 483 (THEHIRGEGCPLPHRLNSMGGCRCGKYLPLKKPTIWHRRH). 7 residues coordinate Zn(2+): His-445, His-447, Cys-453, His-457, Cys-465, Cys-467, and His-483.

It belongs to the arenaviridae GPC protein family. As to quaternary structure, homotetramer; disulfide-linked. In terms of assembly, homotetramer. GP2 homotetramers bind through ionic interactions with GP1 homotetramers to form the GP complex together with the stable signal peptide. The GP-C polyprotein interacts with the host protease MBTPS1/SKI-1 resulting in the polyprotein processing. Post-translationally, specific enzymatic cleavages in vivo yield mature proteins. GP-C polyprotein is cleaved in the endoplasmic reticulum by the host protease MBTPS1. Only cleaved glycoprotein is incorporated into virions. The SSP remains stably associated with the GP complex following cleavage by signal peptidase and plays crucial roles in the trafficking of GP through the secretory pathway. In terms of processing, myristoylation is necessary for GP2-mediated fusion activity.

The protein resides in the virion membrane. It is found in the host endoplasmic reticulum membrane. The protein localises to the host Golgi apparatus membrane. It localises to the host cell membrane. In terms of biological role, class I viral fusion protein that directs fusion of viral and host endosomal membranes, leading to delivery of the nucleocapsid into the cytoplasm. Membrane fusion is mediated by irreversible conformational changes induced upon acidification in the endosome. Its function is as follows. Stable signal peptide (SSP): cleaved and functions as a signal peptide. In addition, it is also retained as the third component of the GP complex. The SSP is required for efficient glycoprotein expression, post-translational maturation cleavage of GP1 and GP2, glycoprotein transport to the cell surface plasma membrane, formation of infectious virus particles, and acid pH-dependent glycoprotein-mediated cell fusion. Functionally, interacts with the host receptor. The polypeptide is Pre-glycoprotein polyprotein GP complex (Tacaribe virus (strain V5) (TCRV)).